The chain runs to 172 residues: Nicotinamide-nucleotide adenylyltransferase (172 aa).

It belongs to the archaeal NMN adenylyltransferase family.

The protein localises to the cytoplasm. It catalyses the reaction beta-nicotinamide D-ribonucleotide + ATP + H(+) = diphosphate + NAD(+). It functions in the pathway cofactor biosynthesis; NAD(+) biosynthesis; NAD(+) from nicotinamide D-ribonucleotide: step 1/1. The polypeptide is Nicotinamide-nucleotide adenylyltransferase (Methanococcus vannielii (strain ATCC 35089 / DSM 1224 / JCM 13029 / OCM 148 / SB)).